The following is a 498-amino-acid chain: ATP synthase subunit beta, chloroplastic (498 aa).

172-179 (GGAGVGKT) serves as a coordination point for ATP.

This sequence belongs to the ATPase alpha/beta chains family. As to quaternary structure, F-type ATPases have 2 components, CF(1) - the catalytic core - and CF(0) - the membrane proton channel. CF(1) has five subunits: alpha(3), beta(3), gamma(1), delta(1), epsilon(1). CF(0) has four main subunits: a(1), b(1), b'(1) and c(9-12).

The protein resides in the plastid. It localises to the chloroplast thylakoid membrane. The catalysed reaction is ATP + H2O + 4 H(+)(in) = ADP + phosphate + 5 H(+)(out). Its function is as follows. Produces ATP from ADP in the presence of a proton gradient across the membrane. The catalytic sites are hosted primarily by the beta subunits. This chain is ATP synthase subunit beta, chloroplastic, found in Carica papaya (Papaya).